Consider the following 175-residue polypeptide: Co-chaperone protein daf-41 (175 aa).

The region spanning 2 to 89 is the CS domain; it reads AKQPTVLWAQ…KTPAWWPRLL (88 aa). The disordered stretch occupies residues 109 to 175; the sequence is DEDDEAEDAG…EEEGKNGTRA (67 aa). Residues 148–168 are compositionally biased toward acidic residues; it reads GLEDDEEDDDMPDLEDNEEEE.

This sequence belongs to the p23/wos2 family. Expressed in anterior and posterior neurons including ASE, AWC, ASI and ADL amphids and phasmid sensory neurons, peripheral neurons and ventral cord motorneurons. Additionally expressed in body wall muscle, pharynx, vulva, germ cells and intestine.

Functionally, co-chaperone for hsp90/daf-21. Involved in regulation of longevity, larval entry and exit from the dauer stage of development and response to environmental cues, such as oxidative stress, in a temperature-dependent manner. Role in daf-16 and hsf-1 inhibition at elevated temperatures. This chain is Co-chaperone protein daf-41, found in Caenorhabditis elegans.